Here is a 165-residue protein sequence, read N- to C-terminus: Putative inactive neutral ceramidase B (165 aa).

It belongs to the neutral ceramidase family. In terms of tissue distribution, ubiquitous. Expression is reduced with increasing age and in late-onset Alzheimer disease (LOAD) patients. This reduction is even more pronounced in patients with an affected mother.

This is Putative inactive neutral ceramidase B from Homo sapiens (Human).